The sequence spans 616 residues: Probable Xaa-Pro aminopeptidase P (616 aa).

Positions 413, 424, 522, and 536 each coordinate Mn(2+).

The protein belongs to the peptidase M24B family. Requires Mn(2+) as cofactor.

The enzyme catalyses Release of any N-terminal amino acid, including proline, that is linked to proline, even from a dipeptide or tripeptide.. Its function is as follows. Catalyzes the removal of a penultimate prolyl residue from the N-termini of peptides. The protein is Probable Xaa-Pro aminopeptidase P (AMPP) of Paracoccidioides brasiliensis (strain Pb18).